Reading from the N-terminus, the 278-residue chain is Asnovolin E/Chermesin D methyltransferase nvfJ (278 aa).

S-adenosyl-L-methionine contacts are provided by residues 125–126, 152–153, and 153–154; these read DL, NI, and IL.

Belongs to the class I-like SAM-binding methyltransferase superfamily. As to quaternary structure, homodimer.

The enzyme catalyses chermesin D + S-adenosyl-L-methionine = chermesin D methyl ester + S-adenosyl-L-homocysteine. It catalyses the reaction asnovolin I + S-adenosyl-L-methionine = asnovolin K + S-adenosyl-L-homocysteine. It participates in secondary metabolite biosynthesis; terpenoid biosynthesis. Methyltransferase; part of the gene cluster that mediates the biosynthesis of novofumigatonin, a heavily oxygenated meroterpenoid containing a unique orthoester moiety. The first step of the pathway is the synthesis of 3,5-dimethylorsellinic acid (DMOA) by the polyketide synthase nvfA via condensation of one acetyl-CoA starter unit with 3 malonyl-CoA units and 2 methylations. DMOA is then converted to farnesyl-DMOA by the farnesyltransferase nvfB. Epoxydation by FAD-dependent monooxygenase nvfK, followed by a protonation-initiated cyclization catalyzed by the terpene cyclase nvfL leads to the production of asnavolin H. The short chain dehydrogenase nvfC then as a 3-OH dehydrogenase of asnovolin H to yield chemesin D. There are two branches to synthesize asnovolin A from chemesin D. In one branch, chemesin D undergoes Baeyer-Villiger oxidation by nvfH, methylation by nvfJ, and enoyl reduction by the nvfM D enoylreductase that reduces the double bond between C-5'and C-6', to form respectively asnovolin I, asnovolin K, and asnovolin A. In the other branch, the methylation precedes the Baeyer-Villiger oxidation and the enoyl reduction to yield asnovolin A via the asnovolin J intermediate. Asnovolin A is further converted to fumigatonoid A by the Fe(II)/2-oxoglutarate-dependent dioxygenase nvfI that catalyzes an endoperoxidation reaction. The alpha/beta hydrolase nvfD then acts as an epimerase that converts fumigatonoid A to its C-5' epimer, which then undergoes spontaneous or nvfD-catalyzed lactonization. The following step utilizes the ketoreductase nvfG to produce fumigatonoid B. The dioxygenase nvfE further converts fumigatonoid B into fumigatonoid C. Finally the Fe(II)/2-oxoglutarate-dependent dioxygenase nvfF catalyzes two rounds of oxidation to transform fumigatonoid C into the end product, novofumigatonin A. The protein is Asnovolin E/Chermesin D methyltransferase nvfJ of Aspergillus novofumigatus (strain IBT 16806).